A 134-amino-acid chain; its full sequence is Small ribosomal subunit protein uS8c (134 aa).

It belongs to the universal ribosomal protein uS8 family. As to quaternary structure, part of the 30S ribosomal subunit.

Its subcellular location is the plastid. The protein localises to the chloroplast. In terms of biological role, one of the primary rRNA binding proteins, it binds directly to 16S rRNA central domain where it helps coordinate assembly of the platform of the 30S subunit. This Bigelowiella natans (Pedinomonas minutissima) protein is Small ribosomal subunit protein uS8c (rps8).